Here is a 327-residue protein sequence, read N- to C-terminus: HTH-type transcriptional regulator EbgR (327 aa).

In terms of domain architecture, HTH lacI-type spans 1–57 (MATLKDIAIEAGVSLATVSRVLNDDPTLNVKEETKHRILEIAEKLEYKTSSARKLQT). The H-T-H motif DNA-binding region spans 4–23 (LKDIAIEAGVSLATVSRVLN).

Repressor for beta galactosidase alpha and beta subunits (ebgA and ebgC). Binds lactose as an inducer. The polypeptide is HTH-type transcriptional regulator EbgR (ebgR) (Escherichia coli (strain K12)).